We begin with the raw amino-acid sequence, 538 residues long: Syncytin-1 (538 aa).

Residues methionine 1 to threonine 20 form the signal peptide. Residues serine 31–glutamine 443 are Extracellular-facing. Asparagine 169 carries an N-linked (GlcNAc...) asparagine glycan. The CXXC signature appears at cysteine 186–cysteine 189. Intrachain disulfides connect cysteine 186/cysteine 189, cysteine 186/cysteine 405, and cysteine 397/cysteine 404. Residues asparagine 208, asparagine 214, asparagine 234, asparagine 242, and asparagine 281 are each glycosylated (N-linked (GlcNAc...) asparagine). Residues isoleucine 320 to isoleucine 340 are fusion peptide. The tract at residues leucine 380–threonine 396 is immunosuppression. The short motif at cysteine 397–cysteine 405 is the CX6CC element. Asparagine 409 carries N-linked (GlcNAc...) asparagine glycosylation. The chain crosses the membrane as a helical span at residues tryptophan 444–phenylalanine 464. The segment at glycine 465–lysine 484 is essential for the fusiogenic function. Topologically, residues glycine 465–serine 538 are cytoplasmic. The disordered stretch occupies residues lysine 494–serine 538.

Belongs to the gamma type-C retroviral envelope protein family. HERV class-I W env subfamily. As to quaternary structure, the mature envelope protein (Env) consists of a trimer of SU-TM heterodimers attached probably by a labile interchain disulfide bond. Interacts with the C-type lectin CD209/DC-SIGN. Specific enzymatic cleavages in vivo yield mature proteins. Envelope glycoproteins are synthesized as an inactive precursor that is heavily N-glycosylated and processed likely by furin in the Golgi to yield the mature SU and TM proteins. The cleavage site between SU and TM requires the minimal sequence [KR]-X-[KR]-R. In terms of processing, the CXXC motif is highly conserved across a broad range of retroviral envelope proteins. It is thought to participate in the formation of a labile disulfide bond possibly with the CX6CC motif present in the transmembrane protein.

The protein resides in the cell membrane. Its subcellular location is the virion. In terms of biological role, this endogenous retroviral envelope protein has retained its original fusogenic properties and participates in trophoblast fusion and the formation of a syncytium during placenta morphogenesis. May recognize and induce fusion through binding of SLC1A4 and SLC1A5. Endogenous envelope proteins may have kept, lost or modified their original function during evolution. Retroviral envelope proteins mediate receptor recognition and membrane fusion during early infection. The surface protein (SU) mediates receptor recognition, while the transmembrane protein (TM) acts as a class I viral fusion protein. The protein may have at least 3 conformational states: pre-fusion native state, pre-hairpin intermediate state, and post-fusion hairpin state. During viral and target cell membrane fusion, the coiled coil regions (heptad repeats) assume a trimer-of-hairpins structure, positioning the fusion peptide in close proximity to the C-terminal region of the ectodomain. The formation of this structure appears to drive apposition and subsequent fusion of membranes. The chain is Syncytin-1 (ERVW-1) from Hylobates pileatus (Pileated gibbon).